The sequence spans 420 residues: Argininosuccinate synthase (420 aa).

23 to 31 (AYSGGLDTS) lines the ATP pocket. Y102 is a binding site for L-citrulline. G132 provides a ligand contact to ATP. L-aspartate contacts are provided by T134, N138, and D139. Position 138 (N138) interacts with L-citrulline. L-citrulline-binding residues include R142, S190, E274, and Y286.

The protein belongs to the argininosuccinate synthase family. Type 1 subfamily. Homotetramer.

It is found in the cytoplasm. The catalysed reaction is L-citrulline + L-aspartate + ATP = 2-(N(omega)-L-arginino)succinate + AMP + diphosphate + H(+). Its pathway is amino-acid biosynthesis; L-arginine biosynthesis; L-arginine from L-ornithine and carbamoyl phosphate: step 2/3. This chain is Argininosuccinate synthase, found in Renibacterium salmoninarum (strain ATCC 33209 / DSM 20767 / JCM 11484 / NBRC 15589 / NCIMB 2235).